Here is a 697-residue protein sequence, read N- to C-terminus: Elongation factor G (697 aa).

The region spanning 8-283 is the tr-type G domain; the sequence is ERCRNIGIMA…AVVDYLPSPL (276 aa). GTP contacts are provided by residues 17–24, 81–85, and 135–138; these read AHIDAGKT, DTPGH, and NKID.

Belongs to the TRAFAC class translation factor GTPase superfamily. Classic translation factor GTPase family. EF-G/EF-2 subfamily.

The protein localises to the cytoplasm. In terms of biological role, catalyzes the GTP-dependent ribosomal translocation step during translation elongation. During this step, the ribosome changes from the pre-translocational (PRE) to the post-translocational (POST) state as the newly formed A-site-bound peptidyl-tRNA and P-site-bound deacylated tRNA move to the P and E sites, respectively. Catalyzes the coordinated movement of the two tRNA molecules, the mRNA and conformational changes in the ribosome. In Koribacter versatilis (strain Ellin345), this protein is Elongation factor G.